The following is a 584-amino-acid chain: MLQYNKNHSSTWQTFRRLWPIIFPFRVGLVVASITLILNATSDALMLALLKPLLDDGFGKANRDVFVWMPLALVGLMGIRGFSGFASTYCISWVSGKVVMQMRRALFKHIMNMPVSFFVKQSTGTLVSRITYDSDQVASSSSGALVTVIREGASIIGLCIMMFYYSWQLSLILVLIAPIVSITIKLVSHRFRTISKKMQSAMGQLTSSAEQMLQGHKEVLIFGGQHTEKDRFNCVSNRMRQQSMKMVQTSSIFDPLIQCVASLALAFVLYAASIPSVMEMLTAGTITVIFSSMIVLMKPLKSLTNVSAQFQRGMAACQTLFSILDLETEKDQGILDITRVQGHIIFDDVTFFYPEKNTPSLYKINFSIESGKTVALVGRSGSGKSTIVNLLTRFYDIDKGRILLDGFNLNDYKLASLRNQIAMVSQNVHLFNDTIANNIAYARRNFYSRESIETAARMACAMDFISQMKNGLDTIIGENGILLSSGQRQRIAIARALLRDCPILIFDEATSALDSASEHIIHKSLDTLKKNRTSLIIAHRLSTVENADEILVIENGYIMERGVHKVLIRRQGIYAQLYKLQFSS.

A run of 5 helical transmembrane segments spans residues 18-38, 65-85, 155-175, 252-272, and 277-297; these read LWPI…TLIL, VFVW…FSGF, IIGL…ILVL, IFDP…LYAA, and VMEM…IVLM. The ABC transmembrane type-1 domain occupies 30–312; it reads VVASITLILN…LTNVSAQFQR (283 aa). Positions 344-580 constitute an ABC transporter domain; that stretch reads IIFDDVTFFY…QGIYAQLYKL (237 aa). Position 378–385 (378–385) interacts with ATP; it reads GRSGSGKS.

Belongs to the ABC transporter superfamily. Lipid exporter (TC 3.A.1.106) family. In terms of assembly, homodimer.

It is found in the cell inner membrane. The enzyme catalyses ATP + H2O + lipid A-core oligosaccharideSide 1 = ADP + phosphate + lipid A-core oligosaccharideSide 2.. Its function is as follows. Involved in lipopolysaccharide (LPS) biosynthesis. Translocates lipid A-core from the inner to the outer leaflet of the inner membrane. Transmembrane domains (TMD) form a pore in the inner membrane and the ATP-binding domain (NBD) is responsible for energy generation. The protein is ATP-dependent lipid A-core flippase of Blochmanniella pennsylvanica (strain BPEN).